Here is a 1083-residue protein sequence, read N- to C-terminus: Centrosomal protein of 131 kDa (1083 aa).

Disordered stretches follow at residues 1-155 (MKGT…AGPR) and 220-258 (GSES…EVTE). Residues 1–250 (MKGTRAIGSV…RNNTGGSTGL (250 aa)) are interaction with PLK4. 2 positions are modified to phosphoserine: serine 14 and serine 35. Phosphoserine; by MAPKAPK2 is present on serine 47. Positions 68-87 (QAINNLRRSNSTTQVSQPRS) are enriched in polar residues. Phosphoserine; by MAPKAPK2 and PLK4 is present on serine 78. A phosphoserine mark is found at serine 89, serine 105, serine 114, serine 146, and serine 150. The span at 138-148 (LPSNARSSSAL) shows a compositional bias: polar residues. Positions 232–245 (NVSSATHSARNNTG) are enriched in polar residues. One can recognise an IQ domain in the interval 269–289 (NQATVTIQRWYRHQVQRRGAG). The segment at 301–429 (REEQRQRSGE…PQQPPEDRTQ (129 aa)) is disordered. Composition is skewed to basic and acidic residues over residues 317-333 (HQQK…EKAR) and 360-369 (GPPENPRETR). Phosphoserine is present on serine 381. The residue at position 383 (threonine 383) is a Phosphothreonine. Phosphoserine occurs at positions 453, 489, 496, 499, 731, and 798. Basic and acidic residues predominate over residues 1047-1076 (KEEAVSSLRTQHEAAVKRADHLEELLEQHR). A disordered region spans residues 1047 to 1083 (KEEAVSSLRTQHEAAVKRADHLEELLEQHRRPTPSTK).

This sequence belongs to the CEP131 family. Self-associates. Associates with the centriolar satellite BBSome protein complex. Interacts with BBS4; the interaction limits BBS4 availability for association with the BBSome complex, and hence negatively regulates ciliary localization of the BBSome complex. Interacts with MIB1. Interacts with PCM1; the interaction increases in response to ultraviolet light (UV) radiation. Associates with microtubules; association with microtubules is reduced in response to cellular stress, such as UV stimulation, in a process that requires p38 MAP kinase signaling. Interacts with CEP290, DCTN1, PCNT, PCM1 and CEP152. Interacts with 14-3-3 proteins following UV-induced phosphorylation by MAPKAPK2; this inhibits formation of novel centriolar satellites. Interacts with SDCCAG8. Interacts with CCDC61. Interacts with PLK4. Ubiquitinated. Undergoes monoubiquitination catalyzed by the E3 ubiquitin-protein ligase MIB1 in proliferating cells, preventing cilia formation. Monoubiquitination by MIB1 is inhibited in response to cellular stress, such as ultraviolet light (UV) radiation or heat shock, resulting in cilia formation initiation. In terms of processing, MAPKAPK2-dependent phosphorylation at Ser-47 and Ser-78 occurs in response to cellular stress such as exposure to ultraviolet irradiation and promotes binding to 14-3-3 proteins which leads to cytoplasmic sequestration of CEP131 and blocks formation of new centriolar satellites. Phosphorylation at Ser-78 mediated by PLK4 is essential for proper organization and integrity of centriolar satellites but is dispensable for its localization to centrioles and its function in ciliogenesis.

It is found in the cytoplasm. It localises to the cytoskeleton. Its subcellular location is the microtubule organizing center. The protein resides in the centrosome. The protein localises to the centriolar satellite. It is found in the centriole. It localises to the cilium basal body. Its subcellular location is the cytoplasmic vesicle. The protein resides in the secretory vesicle. The protein localises to the acrosome. Component of centriolar satellites contributing to the building of a complex and dynamic network required to regulate cilia/flagellum formation. In proliferating cells, MIB1-mediated ubiquitination induces its sequestration within centriolar satellites, precluding untimely cilia formation initiation. In contrast, during normal and ultraviolet or heat shock cellular stress-induced ciliogenesis, its non-ubiquitinated form is rapidly displaced from centriolar satellites and recruited to centrosome/basal bodies in a microtubule- and p38 MAPK-dependent manner. Also acts as a negative regulator of BBSome ciliary trafficking. Plays a role in sperm flagellar formation; may be involved in the regulation of intraflagellar transport (IFT) and/or intramanchette (IMT) trafficking, which are important for axoneme extension and/or cargo delivery to the nascent sperm tail. Required for optimal cell proliferation and cell cycle progression; may play a role in the regulation of genome stability in non-ciliogenic cells. Involved in centriole duplication. Required for CEP152, WDR62 and CEP63 centrosomal localization and promotes the centrosomal localization of CDK2. Essential for maintaining proper centriolar satellite integrity. The polypeptide is Centrosomal protein of 131 kDa (CEP131) (Homo sapiens (Human)).